The primary structure comprises 191 residues: Fe/S biogenesis protein NfuA (191 aa).

[4Fe-4S] cluster is bound by residues Cys-149 and Cys-152.

Belongs to the NfuA family. As to quaternary structure, homodimer. It depends on [4Fe-4S] cluster as a cofactor.

In terms of biological role, involved in iron-sulfur cluster biogenesis. Binds a 4Fe-4S cluster, can transfer this cluster to apoproteins, and thereby intervenes in the maturation of Fe/S proteins. Could also act as a scaffold/chaperone for damaged Fe/S proteins. The polypeptide is Fe/S biogenesis protein NfuA (Photorhabdus laumondii subsp. laumondii (strain DSM 15139 / CIP 105565 / TT01) (Photorhabdus luminescens subsp. laumondii)).